A 683-amino-acid chain; its full sequence is Zinc finger protein 418 (683 aa).

Residues 48 to 123 (VTIEDVTVYF…TPKQGQLRQK (76 aa)) form the KRAB domain. The segment covering 102–120 (QSLSQTEAPQVRTPKQGQL) has biased composition (polar residues). 2 disordered regions span residues 102 to 124 (QSLS…RQKP) and 209 to 247 (DIPN…QHRL). Positions 225–239 (FHRDKNNSESDEYKK) are enriched in basic and acidic residues. 14 C2H2-type zinc fingers span residues 287-309 (YECH…QRRH), 315-337 (YKCG…CRVH), 343-365 (FECL…QRTH), 371-393 (YECS…QRTH), 399-421 (YECG…QRVH), 427-449 (YHCE…SKIH), 455-477 (YECG…QRTH), 483-505 (YECR…RRIH), 511-533 (YECE…QRVH), 539-561 (YKCE…QRTH), 567-589 (YECA…QKIH), 595-617 (YHCD…QRVH), 623-645 (YTCG…RRIH), and 651-673 (YECD…QLLH).

Belongs to the krueppel C2H2-type zinc-finger protein family.

The protein localises to the nucleus. Transcriptional repressor. May play a role as regulator of the ubiquitin-proteasome system and autophagy-lysosomal pathway. In Rattus norvegicus (Rat), this protein is Zinc finger protein 418.